The following is a 530-amino-acid chain: PC4 and SFRS1-interacting protein (530 aa).

One can recognise a PWWP domain in the interval 1–64 (MTRDFKPGDL…PKDIFPYSEN (64 aa)). A Glycyl lysine isopeptide (Lys-Gly) (interchain with G-Cter in SUMO2) cross-link involves residue Lys75. The interval 88–349 (PKVKFSSQQA…VEKKRETSMD (262 aa)) is disordered. The span at 93-107 (SSQQASAKQSNASSD) shows a compositional bias: low complexity. 3 positions are modified to phosphoserine: Ser102, Ser105, and Ser106. Residues 113–135 (KETSVSKEDTDPEEKASNEDVTK) show a composition bias toward basic and acidic residues. Phosphothreonine is present on residues Thr115 and Thr122. Ser129 carries the post-translational modification Phosphoserine. The residue at position 141 (Thr141) is a Phosphothreonine. Basic residues predominate over residues 144–153 (AARRGRKRKA). The Nuclear localization signal motif lies at 146–156 (RRGRKRKAEKQ). Thr167 is subject to Phosphothreonine. Ser177 and Ser206 each carry phosphoserine. Basic and acidic residues predominate over residues 213–261 (EEDKSKKKGQEEKQPKKQLKKDEEGQKEEEKPRKEPDKKEGKKEVESKR). Phosphoserine is present on Ser271. Phosphothreonine is present on Thr272. Phosphoserine occurs at positions 273 and 275. Over residues 274 to 283 (DSEEEGDDQE) the composition is skewed to acidic residues. The span at 287–302 (KRKGGRNFQTAHRRNM) shows a compositional bias: basic residues. The span at 305-349 (GQHEKEAADRKRKQEEQMETEQQNKDEGKKPEVKKVEKKRETSMD) shows a compositional bias: basic and acidic residues. Coiled-coil stretches lie at residues 306–334 (QHEK…EGKK) and 371–395 (NRCI…KHTE). Residues 340–417 (VEKKRETSMD…VSQVIMEKST (78 aa)) form an integrase-binding domain (IBD) region. Phosphoserine is present on Ser434. Thr437 carries the post-translational modification Phosphothreonine. At Ser443 the chain carries Phosphoserine. Positions 446-473 (EQRQHEEANKTKDQGKKGPNKKLEKEQT) are enriched in basic and acidic residues. The interval 446 to 530 (EQRQHEEANK…ISLKDSTLDN (85 aa)) is disordered. A compositionally biased stretch (polar residues) spans 474–494 (GSKTLNGGSDAQDSNQPQHNG). The span at 498–530 (EESKDNHEASSKKKPSSEERETEISLKDSTLDN) shows a compositional bias: basic and acidic residues. Ser514 is modified (phosphoserine). Arg517 is subject to Citrulline. Ser522 is modified (phosphoserine). Residue Thr527 is modified to Phosphothreonine.

Belongs to the HDGF family. Monomer. Interacts with IFRD1/PC4. Interacts (via IBD domain) with POGZ (via IBM motif) and CDCA7L (via IBM motifs). Interacts (via IBD domain) with KMT2A (via IBM motifs) with a moderate affinity whereas interacts with the KMT2A-MEN1 complex with a greater affinity; MEN1 enhances interaction of KMT2A with PSIP1. Interacts (via IBD domain) with IWS1 (via IBM motif), MED1 (via IBM motif) and DBF4 (via IBM motifs). Citrullinated by PADI4.

It localises to the nucleus. Functionally, transcriptional coactivator involved in neuroepithelial stem cell differentiation and neurogenesis. Involved in particular in lens epithelial cell gene regulation and stress responses. May play an important role in lens epithelial to fiber cell terminal differentiation. May play a protective role during stress-induced apoptosis. In Bos taurus (Bovine), this protein is PC4 and SFRS1-interacting protein (PSIP1).